The chain runs to 241 residues: MSLTLLPAVDVADGQAVRLVQGAAGSETAYGDPLDAALAWQRDGAEWIHLVDLDAAFGRGSNADLLADVVRQLDVRVELSGGVRDDESLRAALATGATRVNIGTAALEDPLWCDRVCGEYGDRVAIGLDVRGRTLSARGWTRDGGDLWEVLERLDRAGASRYVVTDITKDGTMRGPNLELLREVCARTNAPVIASGGVSTLADLRALAALEPAGVEGVIAGKALYAGAFTVAEALRTLADA.

Asp-10 (proton acceptor) is an active-site residue. Residue Asp-129 is the Proton donor of the active site.

Belongs to the HisA/HisF family.

Its subcellular location is the cytoplasm. The enzyme catalyses 1-(5-phospho-beta-D-ribosyl)-5-[(5-phospho-beta-D-ribosylamino)methylideneamino]imidazole-4-carboxamide = 5-[(5-phospho-1-deoxy-D-ribulos-1-ylimino)methylamino]-1-(5-phospho-beta-D-ribosyl)imidazole-4-carboxamide. Its pathway is amino-acid biosynthesis; L-histidine biosynthesis; L-histidine from 5-phospho-alpha-D-ribose 1-diphosphate: step 4/9. In Salinispora arenicola (strain CNS-205), this protein is 1-(5-phosphoribosyl)-5-[(5-phosphoribosylamino)methylideneamino] imidazole-4-carboxamide isomerase.